Here is a 567-residue protein sequence, read N- to C-terminus: Beta-galactoside-specific lectin 2 (567 aa).

The signal sequence occupies residues 1–33 (MNARLASSRAWVWCFLMVGLVCGATAKAESKIN). Asn145 is a glycosylation site (N-linked (GlcNAc...) asparagine). The active site involves Glu198. Intrachain disulfides connect Cys280/Cys306 and Cys322/Cys341. A propeptide spans 288 to 301 (DVHNWPLVIRPVMV) (connecting peptide). The Ricin B-type lectin 1 domain occupies 309–439 (SEPTVRIVGR…DSLGQSWLAS (131 aa)). 324-326 (DVR) contacts D-galactose. A glycan (N-linked (GlcNAc...) asparagine) is linked at Asn362. Residues Cys365 and Cys382 are joined by a disulfide bond. An N-linked (GlcNAc...) asparagine glycan is attached at Asn440. Residues 443–566 (APREVTIYGF…GNPNQMWLPV (124 aa)) enclose the Ricin B-type lectin 2 domain. Cystine bridges form between Cys456–Cys469 and Cys495–Cys512. 539 to 541 (DVR) contributes to the D-galactose binding site.

Belongs to the ribosome-inactivating protein family. Type 2 RIP subfamily. In terms of assembly, disulfide-linked dimer of A and B chains.

It catalyses the reaction Endohydrolysis of the N-glycosidic bond at one specific adenosine on the 28S rRNA.. The A chain is responsible for inhibiting protein synthesis through the catalytic inactivation of 60S ribosomal subunits by removing adenine from position 4,324 of 28S rRNA. The B chain binds to cell receptors and probably facilitates the entry into the cell of the A chain; B chains are also responsible for cell agglutination (lectin activity). This chain is Beta-galactoside-specific lectin 2, found in Viscum album (European mistletoe).